We begin with the raw amino-acid sequence, 457 residues long: Siroheme synthase 2 (457 aa).

A precorrin-2 dehydrogenase /sirohydrochlorin ferrochelatase region spans residues 1-204 (MDHLPIFCQL…DDEQAVTRIT (204 aa)). NAD(+) is bound by residues 22–23 (DV) and 43–44 (LA). The residue at position 128 (Ser-128) is a Phosphoserine. Positions 216–457 (GEVVLVGAGP…RDKLNWFSSK (242 aa)) are uroporphyrinogen-III C-methyltransferase. S-adenosyl-L-methionine is bound at residue Pro-225. Asp-248 acts as the Proton acceptor in catalysis. The active-site Proton donor is Lys-270. S-adenosyl-L-methionine-binding positions include 301–303 (GGD), Ile-306, 331–332 (TA), Met-382, and Gly-411.

In the N-terminal section; belongs to the precorrin-2 dehydrogenase / sirohydrochlorin ferrochelatase family. It in the C-terminal section; belongs to the precorrin methyltransferase family.

The catalysed reaction is uroporphyrinogen III + 2 S-adenosyl-L-methionine = precorrin-2 + 2 S-adenosyl-L-homocysteine + H(+). The enzyme catalyses precorrin-2 + NAD(+) = sirohydrochlorin + NADH + 2 H(+). It catalyses the reaction siroheme + 2 H(+) = sirohydrochlorin + Fe(2+). The protein operates within cofactor biosynthesis; adenosylcobalamin biosynthesis; precorrin-2 from uroporphyrinogen III: step 1/1. Its pathway is cofactor biosynthesis; adenosylcobalamin biosynthesis; sirohydrochlorin from precorrin-2: step 1/1. It functions in the pathway porphyrin-containing compound metabolism; siroheme biosynthesis; precorrin-2 from uroporphyrinogen III: step 1/1. It participates in porphyrin-containing compound metabolism; siroheme biosynthesis; siroheme from sirohydrochlorin: step 1/1. The protein operates within porphyrin-containing compound metabolism; siroheme biosynthesis; sirohydrochlorin from precorrin-2: step 1/1. Its function is as follows. Multifunctional enzyme that catalyzes the SAM-dependent methylations of uroporphyrinogen III at position C-2 and C-7 to form precorrin-2 via precorrin-1. Then it catalyzes the NAD-dependent ring dehydrogenation of precorrin-2 to yield sirohydrochlorin. Finally, it catalyzes the ferrochelation of sirohydrochlorin to yield siroheme. This chain is Siroheme synthase 2, found in Cronobacter sakazakii (strain ATCC BAA-894) (Enterobacter sakazakii).